Consider the following 289-residue polypeptide: Delta-sarcoglycan (289 aa).

At 1-35 (MPQEQYTHHRSTMPGSVGPQVYKVGIYGWRKRCLY) the chain is on the cytoplasmic side. Residues 36–56 (FFVLLLMILILVNLAMTIWIL) form a helical; Signal-anchor for type II membrane protein membrane-spanning segment. The Extracellular portion of the chain corresponds to 57-289 (KVMNFTIDGM…TCQINTSVCL (233 aa)). N-linked (GlcNAc...) asparagine glycans are attached at residues N60 and N108. Intrachain disulfides connect C263–C288 and C265–C281. N284 carries N-linked (GlcNAc...) asparagine glycosylation.

The protein belongs to the sarcoglycan beta/delta/gamma/zeta family. As to quaternary structure, interacts with FLNC and DAG1. Cross-link to form 2 major subcomplexes: one consisting of SGCB, SGCD and SGCG and the other consisting of SGCB and SGCD. The association between SGCB and SGCG is particularly strong while SGCA is loosely associated with the other sarcoglycans. Post-translationally, glycosylated. In terms of processing, disulfide bonds are present. As to expression, most strongly expressed in skeletal and cardiac muscle. Also detected in smooth muscle. Weak expression in brain and lung.

The protein resides in the cell membrane. The protein localises to the sarcolemma. Its subcellular location is the cytoplasm. It localises to the cytoskeleton. Functionally, component of the sarcoglycan complex, a subcomplex of the dystrophin-glycoprotein complex which forms a link between the F-actin cytoskeleton and the extracellular matrix. This chain is Delta-sarcoglycan (SGCD), found in Homo sapiens (Human).